We begin with the raw amino-acid sequence, 137 residues long: Acyl carrier protein 4, chloroplastic (137 aa).

Residues 1-48 constitute a chloroplast transit peptide; it reads MASLSTTSLSFKAPSTTISQVLRKASSSQSVTFGRFTSSTKSLRLQIS. One can recognise a Carrier domain in the interval 53-128; sequence AETVQKVSDI…EAADLIEDLV (76 aa). O-(pantetheine 4'-phosphoryl)serine is present on S88.

It belongs to the acyl carrier protein (ACP) family. In terms of processing, 4'-phosphopantetheine is transferred from CoA to a specific serine of apo-ACP by acpS. This modification is essential for activity because fatty acids are bound in thioester linkage to the sulfhydryl of the prosthetic group.

The protein resides in the plastid. The protein localises to the chloroplast. Its function is as follows. Carrier of the growing fatty acid chain in fatty acid biosynthesis that plays a major role in the biosynthesis of fatty acids in leaves. Required for the biosynthesis of chloroplast photosynthetic membrane lipids such as monogalactosyldiacylglycerol, digalactosyldiacylglycerol and phosphatidylglycerol. Is essential for the biosynthesis of the cuticular wax and cutin polymers in leaves, and for the establishment of systemic acquired resistance (SAR). The sequence is that of Acyl carrier protein 4, chloroplastic (ACP4) from Arabidopsis thaliana (Mouse-ear cress).